The primary structure comprises 334 residues: Phospho-N-acetylmuramoyl-pentapeptide-transferase (334 aa).

A run of 10 helical transmembrane segments spans residues 2 to 22 (IPVLVAAGVAFLVTLVLGPVV), 55 to 75 (VIFLFGAAAAVLVVAFLPGGV), 78 to 98 (GWIEGLLVLAVALGFGVLGFM), 116 to 136 (EKLLGQVLIAVALAVTAVFVL), 154 to 174 (GLALDLGWWFFLGVTVFVVLA), 187 to 207 (GLAAGTFAVAALAFAMIALVM), 211 to 231 (WVGIVLGALVGGCVGFLCYNF), 236 to 256 (VFMGDTGSLALGGGLSAAAVI), 262 to 282 (FLLIIGGVFVIETLSVIIQVI), and 311 to 331 (VVLTFWTVGLVLAVLGLAGLK).

The protein belongs to the glycosyltransferase 4 family. MraY subfamily. Mg(2+) is required as a cofactor.

It localises to the cell membrane. It catalyses the reaction UDP-N-acetyl-alpha-D-muramoyl-L-alanyl-gamma-D-glutamyl-meso-2,6-diaminopimeloyl-D-alanyl-D-alanine + di-trans,octa-cis-undecaprenyl phosphate = di-trans,octa-cis-undecaprenyl diphospho-N-acetyl-alpha-D-muramoyl-L-alanyl-D-glutamyl-meso-2,6-diaminopimeloyl-D-alanyl-D-alanine + UMP. The protein operates within cell wall biogenesis; peptidoglycan biosynthesis. Catalyzes the initial step of the lipid cycle reactions in the biosynthesis of the cell wall peptidoglycan: transfers peptidoglycan precursor phospho-MurNAc-pentapeptide from UDP-MurNAc-pentapeptide onto the lipid carrier undecaprenyl phosphate, yielding undecaprenyl-pyrophosphoryl-MurNAc-pentapeptide, known as lipid I. The polypeptide is Phospho-N-acetylmuramoyl-pentapeptide-transferase (Desulforudis audaxviator (strain MP104C)).